Reading from the N-terminus, the 224-residue chain is Phosphoribosylformylglycinamidine synthase subunit PurQ (224 aa).

The region spanning 2 to 224 (TVAIIRFGGS…DGQGVLEGFR (223 aa)) is the Glutamine amidotransferase type-1 domain. Residue Cys85 is the Nucleophile of the active site. Residues His202 and Glu204 contribute to the active site. The segment at 204 to 224 (ERASLPDIGPTDGQGVLEGFR) is disordered.

As to quaternary structure, part of the FGAM synthase complex composed of 1 PurL, 1 PurQ and 2 PurS subunits.

It is found in the cytoplasm. The enzyme catalyses N(2)-formyl-N(1)-(5-phospho-beta-D-ribosyl)glycinamide + L-glutamine + ATP + H2O = 2-formamido-N(1)-(5-O-phospho-beta-D-ribosyl)acetamidine + L-glutamate + ADP + phosphate + H(+). It catalyses the reaction L-glutamine + H2O = L-glutamate + NH4(+). It functions in the pathway purine metabolism; IMP biosynthesis via de novo pathway; 5-amino-1-(5-phospho-D-ribosyl)imidazole from N(2)-formyl-N(1)-(5-phospho-D-ribosyl)glycinamide: step 1/2. Part of the phosphoribosylformylglycinamidine synthase complex involved in the purines biosynthetic pathway. Catalyzes the ATP-dependent conversion of formylglycinamide ribonucleotide (FGAR) and glutamine to yield formylglycinamidine ribonucleotide (FGAM) and glutamate. The FGAM synthase complex is composed of three subunits. PurQ produces an ammonia molecule by converting glutamine to glutamate. PurL transfers the ammonia molecule to FGAR to form FGAM in an ATP-dependent manner. PurS interacts with PurQ and PurL and is thought to assist in the transfer of the ammonia molecule from PurQ to PurL. The sequence is that of Phosphoribosylformylglycinamidine synthase subunit PurQ from Natronomonas pharaonis (strain ATCC 35678 / DSM 2160 / CIP 103997 / JCM 8858 / NBRC 14720 / NCIMB 2260 / Gabara) (Halobacterium pharaonis).